The chain runs to 101 residues: Large ribosomal subunit protein bL25 (101 aa).

The protein belongs to the bacterial ribosomal protein bL25 family. In terms of assembly, part of the 50S ribosomal subunit; part of the 5S rRNA/L5/L18/L25 subcomplex. Contacts the 5S rRNA. Binds to the 5S rRNA independently of L5 and L18.

In terms of biological role, this is one of the proteins that binds to the 5S RNA in the ribosome where it forms part of the central protuberance. This Thermosynechococcus vestitus (strain NIES-2133 / IAM M-273 / BP-1) protein is Large ribosomal subunit protein bL25.